Consider the following 255-residue polypeptide: uncharacterized protein (255 aa).

His6, His8, Glu92, His128, His153, and Asp203 together coordinate a divalent metal cation.

The protein belongs to the metallo-dependent hydrolases superfamily. TatD-type hydrolase family. The cofactor is a divalent metal cation.

This is an uncharacterized protein from Bacillus subtilis (strain 168).